The sequence spans 126 residues: Anti-adapter protein IraD (126 aa).

This sequence belongs to the GpW/Gp25 family. IraD subfamily. As to quaternary structure, interacts with RssB.

It is found in the cytoplasm. Inhibits RpoS proteolysis by regulating RssB activity, thereby increasing the stability of the sigma stress factor RpoS during oxidative stress. Its effect on RpoS stability is due to its interaction with RssB, which probably blocks the interaction of RssB with RpoS, and the consequent delivery of the RssB-RpoS complex to the ClpXP protein degradation pathway. The protein is Anti-adapter protein IraD of Salmonella choleraesuis (strain SC-B67).